The chain runs to 297 residues: uncharacterized protein (297 aa).

Residues 128 to 156 (RGVIVEQESEAAAEKDELESLAKVLESDF) adopt a coiled-coil conformation.

This is an uncharacterized protein from Bacillus subtilis (strain 168).